The chain runs to 172 residues: MDLTQYIASIENYPKEGITFRDISPLMASGKAYSYAIREIVQYACDKDIDMIVGPEARGFIIGCPVAVELGIGFAPVRKPGKLPREVISASYEKEYGLDTLTMHADAIKPGQRVLIVDDLLATGGTVKATIDLVEKLGGIVAGCAFLIELDGLNGRQAIGDYDCKVLMHFPG.

It belongs to the purine/pyrimidine phosphoribosyltransferase family. In terms of assembly, homodimer.

The protein localises to the cytoplasm. The enzyme catalyses AMP + diphosphate = 5-phospho-alpha-D-ribose 1-diphosphate + adenine. Its pathway is purine metabolism; AMP biosynthesis via salvage pathway; AMP from adenine: step 1/1. In terms of biological role, catalyzes a salvage reaction resulting in the formation of AMP, that is energically less costly than de novo synthesis. The sequence is that of Adenine phosphoribosyltransferase from Streptococcus equi subsp. zooepidemicus (strain H70).